The sequence spans 395 residues: Elongation factor Tu (395 aa).

The tr-type G domain maps to 10–205 (KPHVNVGTIG…VDNDIPIPPR (196 aa)). A G1 region spans residues 19-26 (GHVDHGKT). 19–26 (GHVDHGKT) serves as a coordination point for GTP. Residue Thr-26 participates in Mg(2+) binding. Residues 60 to 64 (GITIN) form a G2 region. The G3 stretch occupies residues 81-84 (DCPG). Residues 81 to 85 (DCPGH) and 136 to 139 (NKVD) contribute to the GTP site. Positions 136–139 (NKVD) are G4. Positions 174–176 (SAL) are G5.

This sequence belongs to the TRAFAC class translation factor GTPase superfamily. Classic translation factor GTPase family. EF-Tu/EF-1A subfamily. In terms of assembly, monomer.

The protein localises to the cytoplasm. The enzyme catalyses GTP + H2O = GDP + phosphate + H(+). In terms of biological role, GTP hydrolase that promotes the GTP-dependent binding of aminoacyl-tRNA to the A-site of ribosomes during protein biosynthesis. The sequence is that of Elongation factor Tu from Cytophaga hutchinsonii (strain ATCC 33406 / DSM 1761 / CIP 103989 / NBRC 15051 / NCIMB 9469 / D465).